The sequence spans 322 residues: Serine/threonine-protein phosphatase PP1-2 (322 aa).

Mn(2+) contacts are provided by D60, H62, D88, and N120. Catalysis depends on H121, which acts as the Proton donor. The Mn(2+) site is built by H169 and H244. A disordered region spans residues 298–322 (RQRVSQSSIKESKSATNSLKKSKNN). The segment covering 301–316 (VSQSSIKESKSATNSL) has biased composition (polar residues).

This sequence belongs to the PPP phosphatase family. PP-1 subfamily. The cofactor is Mn(2+).

The catalysed reaction is O-phospho-L-seryl-[protein] + H2O = L-seryl-[protein] + phosphate. It catalyses the reaction O-phospho-L-threonyl-[protein] + H2O = L-threonyl-[protein] + phosphate. Its function is as follows. Essential role in cell cycle control. PP1 is perhaps required for exit from mitosis. The protein is Serine/threonine-protein phosphatase PP1-2 (sds21) of Schizosaccharomyces pombe (strain 972 / ATCC 24843) (Fission yeast).